The sequence spans 278 residues: Probable ribosomal RNA small subunit methyltransferase A (278 aa).

S-adenosyl-L-methionine-binding residues include Asn-23, Leu-25, Gly-50, Glu-71, Asp-95, and Asn-110.

Belongs to the class I-like SAM-binding methyltransferase superfamily. rRNA adenine N(6)-methyltransferase family. RsmA subfamily.

The protein localises to the cytoplasm. Its function is as follows. Specifically dimethylates two adjacent adenosines in the loop of a conserved hairpin near the 3'-end of 16S rRNA in the 30S particle. May play a critical role in biogenesis of 30S subunits. This Thermococcus gammatolerans (strain DSM 15229 / JCM 11827 / EJ3) protein is Probable ribosomal RNA small subunit methyltransferase A.